A 1351-amino-acid chain; its full sequence is Bromodomain-containing protein 4A (1351 aa).

Disordered regions lie at residues Met-1–Gly-23, Pro-35–Arg-58, Glu-168–Ala-244, Ala-285–Thr-368, Glu-478–Tyr-638, Cys-700–Ser-799, and Pro-821–Asp-1334. Residues Arg-58 to Met-164 enclose the Bromo 1 domain. A compositionally biased stretch (low complexity) spans Val-208 to Ser-219. Over residues Thr-220 to Thr-235 the composition is skewed to pro residues. The span at Pro-327–Val-343 shows a compositional bias: basic and acidic residues. Residues Pro-349–Ala-359 show a composition bias toward pro residues. The Bromo 2 domain maps to Thr-366–Met-475. A compositionally biased stretch (pro residues) spans Ala-482–Thr-504. Residues Thr-504 to Ser-522 are NPS region. The span at Ser-505–Glu-517 shows a compositional bias: low complexity. The interval Gln-543–Gly-598 is BID region. Residues Lys-554–Arg-569 show a composition bias toward basic residues. Over residues Lys-570–Ala-586 the composition is skewed to basic and acidic residues. The span at Pro-607 to Ala-621 shows a compositional bias: pro residues. In terms of domain architecture, NET spans Glu-624 to Gln-708. The segment covering Glu-629–Tyr-638 has biased composition (basic and acidic residues). Over residues Ser-725–Ser-738 the composition is skewed to low complexity. The segment covering Gln-751–Pro-767 has biased composition (basic residues). The span at Pro-788 to Ser-799 shows a compositional bias: low complexity. Residues Pro-872–Gln-890 are compositionally biased toward pro residues. The segment covering His-892–Gln-902 has biased composition (basic residues). Positions Leu-927–Pro-953 are enriched in polar residues. Positions Val-968–Ala-983 are enriched in pro residues. Low complexity-rich tracts occupy residues Pro-994–Gly-1003 and Gln-1011–Gln-1028. The tract at residues Arg-1051–Phe-1350 is C-terminal (CTD) region. The segment covering Pro-1075–Pro-1089 has biased composition (pro residues). 2 stretches are compositionally biased toward basic and acidic residues: residues Pro-1150–Arg-1161 and Pro-1176–Ile-1197. A compositionally biased stretch (polar residues) spans Pro-1214–Ser-1224. Residues Glu-1226–Glu-1284 are compositionally biased toward basic and acidic residues. Residues Ser-1301–Met-1310 show a composition bias toward low complexity. Residues Asp-1311 to Arg-1323 show a composition bias toward basic and acidic residues.

This sequence belongs to the BET family.

The protein localises to the nucleus. The protein resides in the chromosome. Functionally, chromatin reader protein that recognizes and binds acetylated histones and plays a key role in transmission of epigenetic memory across cell divisions and transcription regulation. Remains associated with acetylated chromatin throughout the entire cell cycle and provides epigenetic memory for postmitotic G1 gene transcription by preserving acetylated chromatin status and maintaining high-order chromatin structure. During interphase, plays a key role in regulating the transcription of signal-inducible genes by associating with the P-TEFb complex and recruiting it to promoters. This Xenopus laevis (African clawed frog) protein is Bromodomain-containing protein 4A (brd4-a).